Reading from the N-terminus, the 226-residue chain is Isoprenyl transferase (226 aa).

The active site involves Asp12. Residue Asp12 coordinates Mg(2+). Substrate contacts are provided by residues 13 to 16 (GNAR), Trp17, Lys25, His29, and 57 to 59 (SSE). Asn60 serves as the catalytic Proton acceptor. Residues Trp61, Arg63, Arg174, and 180-182 (RIS) contribute to the substrate site. Glu193 lines the Mg(2+) pocket.

It belongs to the UPP synthase family. In terms of assembly, homodimer. Mg(2+) serves as cofactor.

Catalyzes the condensation of isopentenyl diphosphate (IPP) with allylic pyrophosphates generating different type of terpenoids. The polypeptide is Isoprenyl transferase (Rickettsia typhi (strain ATCC VR-144 / Wilmington)).